The sequence spans 176 residues: Corrinoid adenosyltransferase (176 aa).

Residues T6–T14, K24, R131–I136, and N155 each bind ATP.

It belongs to the Cob(I)alamin adenosyltransferase family.

The protein resides in the cytoplasm. It carries out the reaction 2 cob(II)yrinate a,c diamide + reduced [electron-transfer flavoprotein] + 2 ATP = 2 adenosylcob(III)yrinate a,c-diamide + 2 triphosphate + oxidized [electron-transfer flavoprotein] + 3 H(+). The catalysed reaction is 2 cob(II)alamin + reduced [electron-transfer flavoprotein] + 2 ATP = 2 adenosylcob(III)alamin + 2 triphosphate + oxidized [electron-transfer flavoprotein] + 3 H(+). The protein operates within cofactor biosynthesis; adenosylcobalamin biosynthesis; adenosylcobalamin from cob(II)yrinate a,c-diamide: step 2/7. The sequence is that of Corrinoid adenosyltransferase from Citrobacter freundii.